Consider the following 436-residue polypeptide: Chorion-specific transcription factor GCMa (436 aa).

Positions Leu-14 to Met-169 form a DNA-binding region, GCM. The Zn(2+) site is built by Cys-76, Cys-82, Cys-86, Cys-113, Cys-116, Cys-125, His-152, and His-154. Residues Lys-171–Leu-202 form a disordered region. Polar residues predominate over residues Thr-174 to Leu-202.

Post-translationally, polyubiquitinated in the presence of UBE2D2 and FBXW2 (in vitro). As to expression, highly expressed in the placenta. Expressed in trophoblast cells of the villi.

Its subcellular location is the nucleus. In terms of biological role, transcription factor involved in the control of expression of placental growth factor (PGF) and other placenta-specific genes. Binds to the trophoblast-specific element 2 (TSE2) of the aromatase gene enhancer. Binds to the SYDE1 promoter. Has a central role in mediating the differentiation of trophoblast cells along both the villous and extravillous pathways in placental development. In Homo sapiens (Human), this protein is Chorion-specific transcription factor GCMa (GCM1).